The primary structure comprises 1011 residues: Antigenic heat-stable 120 kDa protein (1011 aa).

3 disordered regions span residues 1–37 (DTSE…TPAL), 54–73 (TPSM…TSDP), and 348–396 (GQSK…PQSQ). The segment covering 12 to 27 (EYTEEQKQTEEQEQKE) has biased composition (basic and acidic residues). 2 stretches are compositionally biased toward polar residues: residues 348 to 373 (GQSK…QYKQ) and 380 to 396 (PTNQ…PQSQ).

It localises to the cytoplasm. This is Antigenic heat-stable 120 kDa protein (sca4) from Rickettsia sibirica subsp. mongolitimonae (Rickettsia mongolotimonae).